The primary structure comprises 261 residues: Probable membrane transporter protein XF_0764 (261 aa).

The next 8 membrane-spanning stretches (helical) occupy residues 6-26 (LIVT…LGGG), 29-49 (ILAT…IAIG), 78-98 (VIFA…GMLI), 99-119 (DGQR…LLML), 150-170 (AASG…LIFA), 175-195 (TINA…ITTL), 205-225 (WTIA…GTLL), and 239-259 (VFGL…WASL).

It belongs to the 4-toluene sulfonate uptake permease (TSUP) (TC 2.A.102) family.

Its subcellular location is the cell membrane. This chain is Probable membrane transporter protein XF_0764, found in Xylella fastidiosa (strain 9a5c).